The chain runs to 355 residues: tRNA N6-adenosine threonylcarbamoyltransferase (355 aa).

2 residues coordinate Fe cation: histidine 111 and histidine 115. Substrate is bound by residues 134–138 (LVSGG), aspartate 167, glycine 180, aspartate 184, and asparagine 279. Aspartate 307 serves as a coordination point for Fe cation.

The protein belongs to the KAE1 / TsaD family. Fe(2+) serves as cofactor.

It localises to the cytoplasm. It catalyses the reaction L-threonylcarbamoyladenylate + adenosine(37) in tRNA = N(6)-L-threonylcarbamoyladenosine(37) in tRNA + AMP + H(+). Required for the formation of a threonylcarbamoyl group on adenosine at position 37 (t(6)A37) in tRNAs that read codons beginning with adenine. Is involved in the transfer of the threonylcarbamoyl moiety of threonylcarbamoyl-AMP (TC-AMP) to the N6 group of A37, together with TsaE and TsaB. TsaD likely plays a direct catalytic role in this reaction. The sequence is that of tRNA N6-adenosine threonylcarbamoyltransferase from Picosynechococcus sp. (strain ATCC 27264 / PCC 7002 / PR-6) (Agmenellum quadruplicatum).